Reading from the N-terminus, the 267-residue chain is Indole-3-glycerol phosphate synthase (267 aa).

It belongs to the TrpC family.

It carries out the reaction 1-(2-carboxyphenylamino)-1-deoxy-D-ribulose 5-phosphate + H(+) = (1S,2R)-1-C-(indol-3-yl)glycerol 3-phosphate + CO2 + H2O. The protein operates within amino-acid biosynthesis; L-tryptophan biosynthesis; L-tryptophan from chorismate: step 4/5. The sequence is that of Indole-3-glycerol phosphate synthase from Cupriavidus taiwanensis (strain DSM 17343 / BCRC 17206 / CCUG 44338 / CIP 107171 / LMG 19424 / R1) (Ralstonia taiwanensis (strain LMG 19424)).